The primary structure comprises 333 residues: MVSSTSQIISTSPSRDDVVPSRKKVTLPPWLEVAKPRLIPLLLATTLGGMALSEGWPLPSPRLACTLGGGALAAAAAGALNCLWEQDLDGRMKRTSSRALPAGKLSPSAVFTGAISCTLAAAALLVSGVNCLAAGLSLLGLCSYVLLYTAFLKPRTSQNIVIGGVAGAIPPLVGAAAATGHIGLSGWWLFALVMVWTPAHFWALAILLKDDYRSVGIPMLPVVKGSVFTAKAIAQYGWATVLLSCFGVFALPEGGALYGILLVPFNVRLLQMVRRLAADPEDLQRAKGLFRWSILYMFGICLLLVVSRSTLADQFHNQAIYLFTNMGSVFSIA.

Over residues 1 to 13 the composition is skewed to low complexity; it reads MVSSTSQIISTSP. Positions 1–21 are disordered; the sequence is MVSSTSQIISTSPSRDDVVPS. The next 8 membrane-spanning stretches (helical) occupy residues 38–58, 63–83, 109–129, 132–152, 160–180, 188–208, 245–265, and 286–306; these read LIPL…GWPL, LACT…LNCL, AVFT…VSGV, LAAG…TAFL, IVIG…AATG, WLFA…AILL, CFGV…LVPF, and AKGL…LLVV.

The protein belongs to the UbiA prenyltransferase family. Protoheme IX farnesyltransferase subfamily.

It localises to the cell inner membrane. It catalyses the reaction heme b + (2E,6E)-farnesyl diphosphate + H2O = Fe(II)-heme o + diphosphate. It functions in the pathway porphyrin-containing compound metabolism; heme O biosynthesis; heme O from protoheme: step 1/1. In terms of biological role, converts heme B (protoheme IX) to heme O by substitution of the vinyl group on carbon 2 of heme B porphyrin ring with a hydroxyethyl farnesyl side group. The protein is Protoheme IX farnesyltransferase of Prochlorococcus marinus (strain SARG / CCMP1375 / SS120).